We begin with the raw amino-acid sequence, 748 residues long: Antigen peptide transporter 1 (748 aa).

Topologically, residues 1 to 15 are cytoplasmic; sequence MASSRCPAPRGCRCL. The helical transmembrane segment at 16 to 36 threads the bilayer; the sequence is PGASLAWLGTVLLFLADWVLL. At 37–53 the chain is on the lumenal side; sequence RTALPRIFSLLVPTALP. A helical membrane pass occupies residues 54-76; the sequence is LLRVWAVGLSRWAVLWLGACGVL. The Cytoplasmic segment spans residues 77–92; the sequence is RATVGSKSENAGAQGW. A helical transmembrane segment spans residues 93–113; the sequence is LAALEPLAAALGLALPGLALF. Residues 114 to 133 lie on the Lumenal side of the membrane; it reads RELISWGAPGSADSTRLLHW. Residues 134–154 traverse the membrane as a helical segment; that stretch reads GSHPSAFVVSYAAALPAAALW. Residues 155-186 are Cytoplasmic-facing; that stretch reads HKLGSLWVPGGQGGSGNPVRRLLGCLGSETRR. Residues 187–207 traverse the membrane as a helical segment; that stretch reads LSLFLVLVVLSSLGEMAIPFF. The region spanning 187 to 470 is the ABC transmembrane type-1 domain; it reads LSLFLVLVVL…LLSIYPRVQK (284 aa). The Lumenal portion of the chain corresponds to 208-227; sequence TGRLTDWILQDGSADTFTRN. Residues 228–248 traverse the membrane as a helical segment; sequence LTLMSILTIASAVLEFVGDGI. Residues 249-298 are Cytoplasmic-facing; that stretch reads YNNTMGHVHSHLQGEVFGAVLRQETEFFQQNQTGNITSRVTEDTSTLSDS. A helical membrane pass occupies residues 299-319; the sequence is LSENLSLFLWYLVRGLCLLGI. Over 320–328 the chain is Lumenal; it reads MLWGSVSLT. A helical transmembrane segment spans residues 329–349; it reads MVTLVTLPLLFLLPKKVGKWY. Topologically, residues 350–418 are cytoplasmic; sequence QLLEVQVRES…AVNSWTTSIS (69 aa). The tract at residues 375–420 is part of the peptide-binding site; it reads PTVRSFANEEGEAQKFREKLQEIKTLNQKEAVAYAVNSWTTSISGM. The chain crosses the membrane as a helical span at residues 419–439; it reads GMLLKVGILYIGGQLVTSGAV. At 440 to 443 the chain is on the lumenal side; the sequence is SSGN. A helical transmembrane segment spans residues 444 to 464; it reads LVTFVLYQMQFTQAVEVLLSI. The part of the peptide-binding site stretch occupies residues 453–487; that stretch reads QFTQAVEVLLSIYPRVQKAVGSSEKIFEYLDRTPR. Residues 465-748 lie on the Cytoplasmic side of the membrane; it reads YPRVQKAVGS…MVQAPADAPE (284 aa). An ABC transporter domain is found at 503–742; that stretch reads VQFQDVSFAY…KGCYWAMVQA (240 aa). Residues 538-546, 641-647, and glutamine 701 each bind ATP; these read GPNGSGKST and SQLSGGQ. Serine 545 provides a ligand contact to Mg(2+).

This sequence belongs to the ABC transporter superfamily. ABCB family. MHC peptide exporter (TC 3.A.1.209) subfamily. Heterodimer of TAP1 and TAP2 (TAP1-TAP2). A component of the peptide loading complex (PLC), interacts via TAPBP with MHCI heterodimer; this interaction mediates peptide-MHCI assembly. Interacts with PSMB5 and PSMB8. Mg(2+) serves as cofactor.

The protein localises to the endoplasmic reticulum membrane. It catalyses the reaction a peptide antigen(in) + ATP + H2O = a peptide antigen(out) + ADP + phosphate + H(+). ABC transporter associated with antigen processing. In complex with TAP2 mediates unidirectional translocation of peptide antigens from cytosol to endoplasmic reticulum (ER) for loading onto MHC class I (MHCI) molecules. Uses the chemical energy of ATP to export peptides against the concentration gradient. During the transport cycle alternates between 'inward-facing' state with peptide binding site facing the cytosol to 'outward-facing' state with peptide binding site facing the ER lumen. Peptide antigen binding to ATP-loaded TAP1-TAP2 induces a switch to hydrolysis-competent 'outward-facing' conformation ready for peptide loading onto nascent MHCI molecules. Subsequently ATP hydrolysis resets the transporter to the 'inward facing' state for a new cycle. As a component of the peptide loading complex (PLC), acts as a molecular scaffold essential for peptide-MHCI assembly and antigen presentation. This chain is Antigen peptide transporter 1 (TAP1), found in Gorilla gorilla gorilla (Western lowland gorilla).